The primary structure comprises 264 residues: Pyridoxine 5'-phosphate synthase (264 aa).

Asn-28 provides a ligand contact to 3-amino-2-oxopropyl phosphate. 30 to 31 (DH) contacts 1-deoxy-D-xylulose 5-phosphate. 3-amino-2-oxopropyl phosphate is bound at residue Arg-39. Catalysis depends on His-64, which acts as the Proton acceptor. 1-deoxy-D-xylulose 5-phosphate contacts are provided by Arg-66 and His-71. Glu-91 (proton acceptor) is an active-site residue. Thr-121 is a binding site for 1-deoxy-D-xylulose 5-phosphate. The Proton donor role is filled by His-217. 3-amino-2-oxopropyl phosphate-binding positions include Gly-218 and 239–240 (GH).

It belongs to the PNP synthase family. In terms of assembly, homooctamer; tetramer of dimers.

Its subcellular location is the cytoplasm. It catalyses the reaction 3-amino-2-oxopropyl phosphate + 1-deoxy-D-xylulose 5-phosphate = pyridoxine 5'-phosphate + phosphate + 2 H2O + H(+). The protein operates within cofactor biosynthesis; pyridoxine 5'-phosphate biosynthesis; pyridoxine 5'-phosphate from D-erythrose 4-phosphate: step 5/5. Catalyzes the complicated ring closure reaction between the two acyclic compounds 1-deoxy-D-xylulose-5-phosphate (DXP) and 3-amino-2-oxopropyl phosphate (1-amino-acetone-3-phosphate or AAP) to form pyridoxine 5'-phosphate (PNP) and inorganic phosphate. The polypeptide is Pyridoxine 5'-phosphate synthase (Psychrobacter arcticus (strain DSM 17307 / VKM B-2377 / 273-4)).